The primary structure comprises 252 residues: Oncostatin-M (252 aa).

The first 25 residues, 1–25 (MGVLLTQRTLLSLVLALLFPSMASM), serve as a signal peptide directing secretion. 2 disulfide bridges follow: cysteine 31–cysteine 152 and cysteine 74–cysteine 192. Asparagine 100 is a glycosylation site (N-linked (GlcNAc...) asparagine). Disordered stretches follow at residues 162-184 (TAEP…ASDA) and 213-252 (GESP…QLPR). An N-linked (GlcNAc...) asparagine glycan is attached at asparagine 217. The segment covering 218–245 (RSRRHSPHQALRKGVRRTRPSRKGKRLM) has biased composition (basic residues). Residues 222–252 (HSPHQALRKGVRRTRPSRKGKRLMTRGQLPR) constitute a propeptide that is removed on maturation.

Belongs to the LIF/OSM family. In terms of processing, propeptide processing is not important for receptor binding activity but may be important growth-inhibitory activity.

It is found in the secreted. Its function is as follows. Growth regulator. Inhibits the proliferation of a number of tumor cell lines. Stimulates proliferation of AIDS-KS cells. It regulates cytokine production, including IL-6, G-CSF and GM-CSF from endothelial cells. Uses both type I OSM receptor (heterodimers composed of LIFR and IL6ST) and type II OSM receptor (heterodimers composed of OSMR and IL6ST). Involved in the maturation of fetal hepatocytes, thereby promoting liver development and regeneration. This Homo sapiens (Human) protein is Oncostatin-M (OSM).